The primary structure comprises 191 residues: Fe/S biogenesis protein NfuA (191 aa).

[4Fe-4S] cluster-binding residues include cysteine 149 and cysteine 152.

It belongs to the NfuA family. In terms of assembly, homodimer. It depends on [4Fe-4S] cluster as a cofactor.

Involved in iron-sulfur cluster biogenesis. Binds a 4Fe-4S cluster, can transfer this cluster to apoproteins, and thereby intervenes in the maturation of Fe/S proteins. Could also act as a scaffold/chaperone for damaged Fe/S proteins. The sequence is that of Fe/S biogenesis protein NfuA from Erwinia tasmaniensis (strain DSM 17950 / CFBP 7177 / CIP 109463 / NCPPB 4357 / Et1/99).